The sequence spans 131 residues: Small ribosomal subunit protein uS11 (131 aa).

Belongs to the universal ribosomal protein uS11 family. In terms of assembly, part of the 30S ribosomal subunit. Interacts with proteins S7 and S18. Binds to IF-3.

Its function is as follows. Located on the platform of the 30S subunit, it bridges several disparate RNA helices of the 16S rRNA. Forms part of the Shine-Dalgarno cleft in the 70S ribosome. The sequence is that of Small ribosomal subunit protein uS11 from Halorhodospira halophila (strain DSM 244 / SL1) (Ectothiorhodospira halophila (strain DSM 244 / SL1)).